Reading from the N-terminus, the 76-residue chain is Conotoxin ArMLCL-022 (76 aa).

The first 19 residues, 1 to 19 (MLCLPVFIILLLLASTAAS), serve as a signal peptide directing secretion. Residues 20-52 (NPLETRIQSDLIRAALEDADMKTERGFLGVLMK) constitute a propeptide that is removed on maturation.

Belongs to the conotoxin T superfamily. In terms of tissue distribution, expressed by the venom duct.

It is found in the secreted. This Conus arenatus (Sand-dusted cone) protein is Conotoxin ArMLCL-022.